The following is a 235-amino-acid chain: FsC-acetyl coenzyme A-N(2)-transacetylase (235 aa).

Residues 14–190 (LELVPLGHEH…RYSITREEWL (177 aa)) enclose the N-acetyltransferase domain. CoA-binding positions include 106 to 108 (FRV), G114, N146, and 151 to 153 (AVM).

It participates in siderophore biosynthesis. In terms of biological role, fsC-acetyl coenzyme A-N(2)-transacetylase; part of the siderophore biosynthetic pathway. Aspergillus fumigatus produces 4 types of siderophores, low-molecular-mass iron chelators, including excreted fusarinine C (FsC) and triacetylfusarinine C (TAFC) for iron uptake and intacellular ferricrocin (FC) for hyphal and hydroxyferricrocin (HFC) for conidial iron distribution and storage. TAFC consists of 3 N(2)-acetyl-N(5)-anhydromevalonyl-N(5)-hydroxyornithine residues cyclically linked by ester bonds; FC is a cyclic hexapeptide with the structure Gly-Ser-Gly-(N(5)-acetyl-N(5)-hydroxyornithine)x3. The biosynthesis of all four siderophores depends on the hydroxylation of ornithine, catalyzed by the monooxygenase sidA. Subsequently, the pathways for biosynthesis of extra- and intracellular siderophores split. For biosynthesis of extracellular siderophores, the transacylase sidF transfers anhydromevalonyl to N(5)-hydroxyornithine. The required anhydromevalonyl-CoA moiety is derived from mevalonate by CoA ligation and dehydration catalyzed by sidI and sidH respectively. The acetylation of N(5)-hydroxyornithine for FC biosynthesis involves the constitutively expressed sidL. FC is hydroxylated to HFC by an as yet uncharacterized enzyme during conidiation. Assembly of fusarinine C (FsC) and FC is catalyzed by two different nonribosomal peptide synthetases (NRPS), sidD and sidC respectively. Subsequently, sidG catalyzes N2-acetylation of FsC for forming TAFC. Both extra- and intracellular siderophores are crucial for growth during iron limitation and virulence. This chain is FsC-acetyl coenzyme A-N(2)-transacetylase, found in Aspergillus fumigatus (strain ATCC MYA-4609 / CBS 101355 / FGSC A1100 / Af293) (Neosartorya fumigata).